Reading from the N-terminus, the 347-residue chain is tRNA pseudouridine synthase D (347 aa).

The active-site Nucleophile is the aspartate 81. The region spanning 158–304 (GVPNYFGNQR…MRHDRRAIAL (147 aa)) is the TRUD domain.

The protein belongs to the pseudouridine synthase TruD family.

The enzyme catalyses uridine(13) in tRNA = pseudouridine(13) in tRNA. Functionally, responsible for synthesis of pseudouridine from uracil-13 in transfer RNAs. The polypeptide is tRNA pseudouridine synthase D (Vibrio vulnificus (strain CMCP6)).